The chain runs to 205 residues: Urease accessory protein UreG (205 aa).

14 to 21 serves as a coordination point for GTP; sequence GPVGSGKT.

The protein belongs to the SIMIBI class G3E GTPase family. UreG subfamily. In terms of assembly, homodimer. UreD, UreF and UreG form a complex that acts as a GTP-hydrolysis-dependent molecular chaperone, activating the urease apoprotein by helping to assemble the nickel containing metallocenter of UreC. The UreE protein probably delivers the nickel.

It is found in the cytoplasm. Functionally, facilitates the functional incorporation of the urease nickel metallocenter. This process requires GTP hydrolysis, probably effectuated by UreG. The chain is Urease accessory protein UreG from Citrobacter koseri (strain ATCC BAA-895 / CDC 4225-83 / SGSC4696).